Here is a 334-residue protein sequence, read N- to C-terminus: 2,3-bisphosphoglycerate-dependent phosphoglycerate mutase 1 (334 aa).

The transit peptide at 1–48 directs the protein to the chloroplast; sequence MATATSHQSVVSFASLRSSPSSTISQCGFKIDSSLSFTSKKTNFCKIK. Residues 84-91, 97-98, R134, 188-191, K199, 215-216, and 259-260 contribute to the substrate site; these read RHGESLWN, TG, ERMY, RR, and GN. H85 serves as the catalytic Tele-phosphohistidine intermediate. Catalysis depends on E188, which acts as the Proton donor/acceptor.

Belongs to the phosphoglycerate mutase family. BPG-dependent PGAM subfamily.

The protein resides in the plastid. It localises to the chloroplast. The catalysed reaction is (2R)-2-phosphoglycerate = (2R)-3-phosphoglycerate. Its pathway is carbohydrate degradation; glycolysis; pyruvate from D-glyceraldehyde 3-phosphate: step 3/5. Functionally, catalyzes the interconversion of 2-phosphoglycerate and 3-phosphoglycerate. The protein is 2,3-bisphosphoglycerate-dependent phosphoglycerate mutase 1 of Arabidopsis thaliana (Mouse-ear cress).